We begin with the raw amino-acid sequence, 210 residues long: Small ribosomal subunit protein uS3 (210 aa).

The 70-residue stretch at 17–86 folds into the KH type-2 domain; that stretch reads IDEFLEKELR…NPQIDVQEIK (70 aa).

This sequence belongs to the universal ribosomal protein uS3 family. Part of the 30S ribosomal subunit.

Functionally, binds the lower part of the 30S subunit head. The chain is Small ribosomal subunit protein uS3 from Pyrococcus horikoshii (strain ATCC 700860 / DSM 12428 / JCM 9974 / NBRC 100139 / OT-3).